Reading from the N-terminus, the 427-residue chain is L-glutamine:2-deoxy-scyllo-inosose aminotransferase (427 aa).

Residues 1–20 (MPLQSSRLAVDNGTPVRGKP) form a disordered region. Residue lysine 205 is modified to N6-(pyridoxal phosphate)lysine.

Belongs to the DegT/DnrJ/EryC1 family. L-glutamine:2-deoxy-scyllo-inosose/scyllo-inosose aminotransferase subfamily. Pyridoxal 5'-phosphate serves as cofactor.

It catalyses the reaction 2-deoxy-L-scyllo-inosose + L-glutamine = 2-deoxy-scyllo-inosamine + 2-oxoglutaramate. The enzyme catalyses 3-amino-2,3-dideoxy-scyllo-inosose + L-glutamine = 2-deoxystreptamine + 2-oxoglutaramate. It participates in metabolic intermediate biosynthesis; 2-deoxystreptamine biosynthesis; 2-deoxystreptamine from D-glucose 6-phosphate: step 2/4. The protein operates within antibiotic biosynthesis; kanamycin biosynthesis. In terms of biological role, catalyzes the PLP-dependent transamination of 2-deoxy-scyllo-inosose (2-DOI) to form 2-deoxy-scyllo-inosamine (2-DOIA) using L-glutamine as the amino donor. Also catalyzes the transamination of 3-amino-2,3-dideoxy-scyllo-inosose (keto-2-DOIA) into 2-deoxystreptamine (2-DOS). This chain is L-glutamine:2-deoxy-scyllo-inosose aminotransferase (kanB), found in Streptomyces kanamyceticus.